The following is a 177-amino-acid chain: NADH-quinone oxidoreductase subunit B (177 aa).

The [4Fe-4S] cluster site is built by Cys-56, Cys-57, Cys-121, and Cys-151.

It belongs to the complex I 20 kDa subunit family. NDH-1 is composed of 14 different subunits. Subunits NuoB, C, D, E, F, and G constitute the peripheral sector of the complex. It depends on [4Fe-4S] cluster as a cofactor.

It is found in the cell inner membrane. It carries out the reaction a quinone + NADH + 5 H(+)(in) = a quinol + NAD(+) + 4 H(+)(out). NDH-1 shuttles electrons from NADH, via FMN and iron-sulfur (Fe-S) centers, to quinones in the respiratory chain. The immediate electron acceptor for the enzyme in this species is believed to be ubiquinone. Couples the redox reaction to proton translocation (for every two electrons transferred, four hydrogen ions are translocated across the cytoplasmic membrane), and thus conserves the redox energy in a proton gradient. The protein is NADH-quinone oxidoreductase subunit B of Rhodobacter capsulatus (Rhodopseudomonas capsulata).